A 279-amino-acid polypeptide reads, in one-letter code: Phosphatidylglycerol--prolipoprotein diacylglyceryl transferase (279 aa).

A run of 3 helical transmembrane segments spans residues 22–42 (WYGIIIACGILLGYFIAQAAL), 52–72 (LIDIIFYSAIVGFIVARIYFV), and 89–109 (IWHGGIAIHGGLIGGLISGII). Arg137 is a binding site for a 1,2-diacyl-sn-glycero-3-phospho-(1'-sn-glycerol). The next 2 membrane-spanning stretches (helical) occupy residues 203–223 (LGETFFGYLIWYSVGRFFVEA) and 235–255 (IRVAQLVSVVLIMISVIFVIY).

This sequence belongs to the Lgt family.

The protein resides in the cell membrane. The catalysed reaction is L-cysteinyl-[prolipoprotein] + a 1,2-diacyl-sn-glycero-3-phospho-(1'-sn-glycerol) = an S-1,2-diacyl-sn-glyceryl-L-cysteinyl-[prolipoprotein] + sn-glycerol 1-phosphate + H(+). The protein operates within protein modification; lipoprotein biosynthesis (diacylglyceryl transfer). Functionally, catalyzes the transfer of the diacylglyceryl group from phosphatidylglycerol to the sulfhydryl group of the N-terminal cysteine of a prolipoprotein, the first step in the formation of mature lipoproteins. The protein is Phosphatidylglycerol--prolipoprotein diacylglyceryl transferase of Staphylococcus epidermidis (strain ATCC 35984 / DSM 28319 / BCRC 17069 / CCUG 31568 / BM 3577 / RP62A).